The following is an 89-amino-acid chain: FMRFamide-like neuropeptides 19 (89 aa).

Positions 1-20 (MSFQLTLFSMLFLLIAVVVG) are cleaved as a signal peptide. The propeptide occupies 21 to 67 (QPIQSQNGDLKMQAVQDNSPLNMEAFNDDSALYDYLEQSDPSLKSME). At Phe76 the chain carries Phenylalanine amide. The propeptide occupies 80 to 89 (ASWASSVRFG).

The protein belongs to the FARP (FMRFamide related peptide) family. Each flp gene is expressed in a distinct set of neurons. Flp-19 is expressed in the URX interneurons, the serotonin and acetylcholine-expressing HSN neurons, and the AIN, AWA and BAG neurons.

It localises to the secreted. Functionally, FMRFamides and FMRFamide-like peptides are neuropeptides. WANQVRF-amide inhibits the activity of dissected pharyngeal myogenic muscle system. This Caenorhabditis elegans protein is FMRFamide-like neuropeptides 19.